A 284-amino-acid chain; its full sequence is Nucleotide-binding protein Shal_3708 (284 aa).

8 to 15 (GRSGSGKS) serves as a coordination point for ATP. Position 56–59 (56–59 (DIRN)) interacts with GTP.

Belongs to the RapZ-like family.

Functionally, displays ATPase and GTPase activities. This Shewanella halifaxensis (strain HAW-EB4) protein is Nucleotide-binding protein Shal_3708.